A 113-amino-acid chain; its full sequence is Ig heavy chain V-III region U61 (113 aa).

In terms of domain architecture, Ig-like spans 1 to 113 (EVKLEESGGG…YWGQGTLVPV (113 aa)). A disulfide bridge links Cys-22 with Cys-98.

The chain is Ig heavy chain V-III region U61 from Mus musculus (Mouse).